Here is a 107-residue protein sequence, read N- to C-terminus: Large ribosomal subunit protein bL21 (107 aa).

It belongs to the bacterial ribosomal protein bL21 family. In terms of assembly, part of the 50S ribosomal subunit. Contacts protein L20.

Functionally, this protein binds to 23S rRNA in the presence of protein L20. This is Large ribosomal subunit protein bL21 from Pseudothermotoga lettingae (strain ATCC BAA-301 / DSM 14385 / NBRC 107922 / TMO) (Thermotoga lettingae).